Here is a 124-residue protein sequence, read N- to C-terminus: S-adenosylmethionine decarboxylase proenzyme (124 aa).

The active-site Schiff-base intermediate with substrate; via pyruvic acid is the serine 63. Residue serine 63 is modified to Pyruvic acid (Ser); by autocatalysis. The active-site Proton acceptor; for processing activity is the histidine 68. Cysteine 83 (proton donor; for catalytic activity) is an active-site residue.

The protein belongs to the prokaryotic AdoMetDC family. Type 1 subfamily. In terms of assembly, heterotetramer of two alpha and two beta chains arranged as a dimer of alpha/beta heterodimers. The cofactor is pyruvate. Is synthesized initially as an inactive proenzyme. Formation of the active enzyme involves a self-maturation process in which the active site pyruvoyl group is generated from an internal serine residue via an autocatalytic post-translational modification. Two non-identical subunits are generated from the proenzyme in this reaction, and the pyruvate is formed at the N-terminus of the alpha chain, which is derived from the carboxyl end of the proenzyme. The post-translation cleavage follows an unusual pathway, termed non-hydrolytic serinolysis, in which the side chain hydroxyl group of the serine supplies its oxygen atom to form the C-terminus of the beta chain, while the remainder of the serine residue undergoes an oxidative deamination to produce ammonia and the pyruvoyl group blocking the N-terminus of the alpha chain.

The enzyme catalyses S-adenosyl-L-methionine + H(+) = S-adenosyl 3-(methylsulfanyl)propylamine + CO2. Its pathway is amine and polyamine biosynthesis; S-adenosylmethioninamine biosynthesis; S-adenosylmethioninamine from S-adenosyl-L-methionine: step 1/1. Catalyzes the decarboxylation of S-adenosylmethionine to S-adenosylmethioninamine (dcAdoMet), the propylamine donor required for the synthesis of the polyamines spermine and spermidine from the diamine putrescine. In Caldicellulosiruptor bescii (strain ATCC BAA-1888 / DSM 6725 / KCTC 15123 / Z-1320) (Anaerocellum thermophilum), this protein is S-adenosylmethionine decarboxylase proenzyme.